The chain runs to 503 residues: AMP phosphorylase (503 aa).

Residues Gly168, 194–199 (SRAITS), and Thr203 contribute to the AMP site. The active-site Proton donor is Asp256. 2 residues coordinate AMP: Ser264 and Lys288.

Belongs to the thymidine/pyrimidine-nucleoside phosphorylase family. Type 2 subfamily.

It catalyses the reaction AMP + phosphate = alpha-D-ribose 1,5-bisphosphate + adenine. The enzyme catalyses CMP + phosphate = cytosine + alpha-D-ribose 1,5-bisphosphate. The catalysed reaction is UMP + phosphate = alpha-D-ribose 1,5-bisphosphate + uracil. Functionally, catalyzes the conversion of AMP and phosphate to adenine and ribose 1,5-bisphosphate (R15P). Exhibits phosphorylase activity toward CMP and UMP in addition to AMP. Functions in an archaeal AMP degradation pathway, together with R15P isomerase and RubisCO. This chain is AMP phosphorylase, found in Pyrococcus furiosus (strain ATCC 43587 / DSM 3638 / JCM 8422 / Vc1).